We begin with the raw amino-acid sequence, 575 residues long: Adenine deaminase (575 aa).

The protein belongs to the metallo-dependent hydrolases superfamily. Adenine deaminase family. Mn(2+) is required as a cofactor.

The enzyme catalyses adenine + H2O + H(+) = hypoxanthine + NH4(+). The chain is Adenine deaminase from Nitratidesulfovibrio vulgaris (strain DP4) (Desulfovibrio vulgaris).